We begin with the raw amino-acid sequence, 580 residues long: Amino-acid acetyltransferase, mitochondrial (580 aa).

An N-acetyltransferase domain is found at 403 to 560 (LTMQNLFDDK…NPRHKNGVVN (158 aa)).

The protein belongs to the acetyltransferase family.

It localises to the mitochondrion. The enzyme catalyses L-glutamate + acetyl-CoA = N-acetyl-L-glutamate + CoA + H(+). It participates in amino-acid biosynthesis; L-arginine biosynthesis; N(2)-acetyl-L-ornithine from L-glutamate: step 1/4. Functionally, N-acetylglutamate synthase involved in arginine biosynthesis. In Candida dubliniensis (strain CD36 / ATCC MYA-646 / CBS 7987 / NCPF 3949 / NRRL Y-17841) (Yeast), this protein is Amino-acid acetyltransferase, mitochondrial (ARG2).